We begin with the raw amino-acid sequence, 568 residues long: MAQVDSQDRWGEASPLSSLTEEAHDTQMLSMNLESDDEDGGEAEKEGTADPVACPRGSSPVTHENPDLPWPHPLGKEEEKFSDSSSAGGMGQKPVEMSGKASWSRDVTKINETQGSPGASRALGSLPSGLAHKLLGQMQPLGDRLPAGDDGYSGANQDAVLDVPPSFPSNGKYLCAHKSVDTSAGNSSLLCFPRPGSNWDLPTQETHTPAQASATPASLAAAVLAKARNSRKVQNQAGRREGGEAEARPYRCLRGGRAFQKPSKPLSPAETRGGAAKRYACELCGKAYSHRGTLQQHRRLHTGERPYQCSFCDKAYTWSSDHRKHIRTHTGEKPYPCPDCGKAFVRSSDLRKHQRNMHSNNKPFPCSECGLTFNKPLSLLRHQRTHLGAKPFRCPACDREFAVASRMVEHQRVHSGERPFPCPTCGKCFTKSSNLSEHQTLHTGQRPFKCADCGVAFAQPSRLVRHQRIHTGERPFPCTQCGQAFARSSTLKRHQQIHSGEKGFLCAECGRAFRIASELAQHIRMHNGERPYQCEDCGQAFTRSNHLQRHRAKHGTCKKEPIPSSSDE.

The segment covering 1–11 (MAQVDSQDRWG) has biased composition (basic and acidic residues). Residues 1–106 (MAQVDSQDRW…MSGKASWSRD (106 aa)) form a disordered region. C2H2-type zinc fingers lie at residues 279-301 (YACE…RRLH), 307-329 (YQCS…IRTH), 335-358 (YPCP…RNMH), 364-386 (FPCS…QRTH), 392-414 (FRCP…QRVH), 420-442 (FPCP…QTLH), 448-470 (FKCA…QRIH), 476-498 (FPCT…QQIH), 504-526 (FLCA…IRMH), and 532-554 (YQCE…RAKH). A disordered region spans residues 548-568 (QRHRAKHGTCKKEPIPSSSDE).

It belongs to the krueppel C2H2-type zinc-finger protein family.

The protein localises to the nucleus. May be involved in transcriptional regulation. The sequence is that of Zinc finger protein 648 (ZNF648) from Homo sapiens (Human).